A 63-amino-acid chain; its full sequence is Large ribosomal subunit protein bL28 (63 aa).

The protein belongs to the bacterial ribosomal protein bL28 family.

The protein is Large ribosomal subunit protein bL28 of Coprothermobacter proteolyticus (strain ATCC 35245 / DSM 5265 / OCM 4 / BT).